Reading from the N-terminus, the 579-residue chain is Arginine--tRNA ligase (579 aa).

The 'HIGH' region motif lies at 127–137 (PNLAKEMHVGH).

Belongs to the class-I aminoacyl-tRNA synthetase family. As to quaternary structure, monomer.

It localises to the cytoplasm. The catalysed reaction is tRNA(Arg) + L-arginine + ATP = L-arginyl-tRNA(Arg) + AMP + diphosphate. The polypeptide is Arginine--tRNA ligase (Stutzerimonas stutzeri (strain A1501) (Pseudomonas stutzeri)).